A 318-amino-acid polypeptide reads, in one-letter code: Ankyrin repeat and SOCS box protein 7 (318 aa).

ANK repeat units follow at residues 13-42 (QEEL…SPNG), 46-75 (NGWT…DPTV), 80-109 (GGFT…RSDI), 116-145 (DGWT…EVDP), 149-178 (KGTT…NIDI), 180-208 (NGFL…DTNL), and 213-242 (DGQT…DTNT). One can recognise an SOCS box domain in the interval 265–318 (LDFLQEVTRQPRNLQDLCRIKIRQCIGLQNLKLLDELPIAKVMKDYLKHKFDDI).

Belongs to the ankyrin SOCS box (ASB) family. In terms of assembly, interacts with CUL5. Interacts with RNF7. Interacts with PSRC1.

The protein operates within protein modification; protein ubiquitination. In terms of biological role, probable substrate-recognition component of a SCF-like ECS (Elongin-Cullin-SOCS-box protein) E3 ubiquitin-protein ligase complex which mediates the ubiquitination and subsequent proteasomal degradation of target proteins. Plays a role in spindle dynamics and genome integrity by targeting the mitotic progression protein PSRC1 for proteasomal degradation in a cell cycle-dependent manner. Also participates in meiosis by mediating the proper attachment between kinetochores and microtubules. The sequence is that of Ankyrin repeat and SOCS box protein 7 (ASB7) from Homo sapiens (Human).